The following is a 64-amino-acid chain: SPbeta prophage-derived uncharacterized protein YosJ (64 aa).

In Bacillus subtilis (strain 168), this protein is SPbeta prophage-derived uncharacterized protein YosJ (yosJ).